The sequence spans 62 residues: Phospholipase A2 superbin a (62 aa).

The Ca(2+) site is built by Tyr28, Gly30, and Gly32. A disulfide bridge connects residues Cys29 and Cys45. His48 is an active-site residue. Asp49 is a Ca(2+) binding site.

Ca(2+) is required as a cofactor. In terms of tissue distribution, expressed by the venom gland.

The protein resides in the secreted. It carries out the reaction a 1,2-diacyl-sn-glycero-3-phosphocholine + H2O = a 1-acyl-sn-glycero-3-phosphocholine + a fatty acid + H(+). Snake venom phospholipase A2 (PLA2) that inhibits collagen-induced platelet aggregation. In terms of inhibition of platelet aggregation, superbin a is more potent as superbin b, c, and d. PLA2 catalyzes the calcium-dependent hydrolysis of the 2-acyl groups in 3-sn-phosphoglycerides. The chain is Phospholipase A2 superbin a from Austrelaps superbus (Lowland copperhead snake).